Reading from the N-terminus, the 221-residue chain is ATP phosphoribosyltransferase (221 aa).

The protein belongs to the ATP phosphoribosyltransferase family. Short subfamily. As to quaternary structure, heteromultimer composed of HisG and HisZ subunits.

The protein resides in the cytoplasm. The catalysed reaction is 1-(5-phospho-beta-D-ribosyl)-ATP + diphosphate = 5-phospho-alpha-D-ribose 1-diphosphate + ATP. It participates in amino-acid biosynthesis; L-histidine biosynthesis; L-histidine from 5-phospho-alpha-D-ribose 1-diphosphate: step 1/9. Functionally, catalyzes the condensation of ATP and 5-phosphoribose 1-diphosphate to form N'-(5'-phosphoribosyl)-ATP (PR-ATP). Has a crucial role in the pathway because the rate of histidine biosynthesis seems to be controlled primarily by regulation of HisG enzymatic activity. The sequence is that of ATP phosphoribosyltransferase from Rhizorhabdus wittichii (strain DSM 6014 / CCUG 31198 / JCM 15750 / NBRC 105917 / EY 4224 / RW1) (Sphingomonas wittichii).